We begin with the raw amino-acid sequence, 435 residues long: Cysteine--tRNA ligase (435 aa).

Residue cysteine 24 coordinates Zn(2+). The short motif at 26–36 (PTVYDHIHIGN) is the 'HIGH' region element. Positions 202, 228, and 232 each coordinate Zn(2+). Positions 260–264 (KMSKS) match the 'KMSKS' region motif. Residue lysine 263 participates in ATP binding.

It belongs to the class-I aminoacyl-tRNA synthetase family. Monomer. Zn(2+) serves as cofactor.

The protein localises to the cytoplasm. The catalysed reaction is tRNA(Cys) + L-cysteine + ATP = L-cysteinyl-tRNA(Cys) + AMP + diphosphate. In Mycoplasmoides gallisepticum (strain R(low / passage 15 / clone 2)) (Mycoplasma gallisepticum), this protein is Cysteine--tRNA ligase.